The chain runs to 284 residues: L-ribulose-5-phosphate 3-epimerase UlaE (284 aa).

Belongs to the L-ribulose-5-phosphate 3-epimerase family.

It catalyses the reaction L-ribulose 5-phosphate = L-xylulose 5-phosphate. The protein operates within cofactor degradation; L-ascorbate degradation; D-xylulose 5-phosphate from L-ascorbate: step 3/4. Functionally, catalyzes the isomerization of L-xylulose-5-phosphate to L-ribulose-5-phosphate. Is involved in the anaerobic L-ascorbate utilization. In Escherichia coli O8 (strain IAI1), this protein is L-ribulose-5-phosphate 3-epimerase UlaE.